A 144-amino-acid polypeptide reads, in one-letter code: Protein MIX23 (144 aa).

The residue at position 2 (alanine 2) is an N-acetylalanine. Residues 82-120 (VKSLREEREKNLDDLTLLKRLRKEQTKLKWMQSELNVEE) are a coiled coil. The residue at position 100 (lysine 100) is an N6-acetyllysine.

This sequence belongs to the MIX23 family.

In Mus musculus (Mouse), this protein is Protein MIX23.